The primary structure comprises 273 residues: Outer surface protein A (273 aa).

A signal peptide spans 1–16 (MKKYLLGIGLILALIA). Residue cysteine 17 is the site of N-palmitoyl cysteine attachment. A lipid anchor (S-diacylglycerol cysteine) is attached at cysteine 17.

It belongs to the OspA lipoprotein family.

The protein localises to the cell outer membrane. It localises to the cell surface. The sequence is that of Outer surface protein A from Borreliella burgdorferi (Lyme disease spirochete).